We begin with the raw amino-acid sequence, 1069 residues long: Carbamoyl phosphate synthase large chain (1069 aa).

The carboxyphosphate synthetic domain stretch occupies residues 1 to 401; sequence MPLNKDIKRV…AFLKGIRSLE (401 aa). ATP is bound by residues Arg129, Arg169, Gly175, Gly176, Lys208, Val210, Glu215, Gly241, Ile242, His243, Gln284, and Glu298. The region spanning 133–327 is the ATP-grasp 1 domain; sequence RDMMNRIGEP…IAKLAAKIAL (195 aa). Mg(2+) is bound by residues Gln284, Glu298, and Asn300. Positions 284, 298, and 300 each coordinate Mn(2+). Residues 402–549 form an oligomerization domain region; that stretch reads IGKYSLDHKK…YSTYEQYDEV (148 aa). A carbamoyl phosphate synthetic domain region spans residues 550–932; it reads EVSNRRKVIV…ALYKGFVGAN (383 aa). Positions 674-864 constitute an ATP-grasp 2 domain; that stretch reads DELLERLDIS…IVDIATQVML (191 aa). Positions 710, 749, 751, 755, 780, 781, 782, 783, 823, and 835 each coordinate ATP. Mg(2+) is bound by residues Gln823, Glu835, and Asn837. 3 residues coordinate Mn(2+): Gln823, Glu835, and Asn837. Positions 932-1069 constitute an MGS-like domain; the sequence is NMYPSKEKGK…KDLEVFDITK (138 aa). The segment at 933-1069 is allosteric domain; sequence MYPSKEKGKI…KDLEVFDITK (137 aa).

The protein belongs to the CarB family. In terms of assembly, composed of two chains; the small (or glutamine) chain promotes the hydrolysis of glutamine to ammonia, which is used by the large (or ammonia) chain to synthesize carbamoyl phosphate. Tetramer of heterodimers (alpha,beta)4. Mg(2+) is required as a cofactor. Mn(2+) serves as cofactor.

It carries out the reaction hydrogencarbonate + L-glutamine + 2 ATP + H2O = carbamoyl phosphate + L-glutamate + 2 ADP + phosphate + 2 H(+). The enzyme catalyses hydrogencarbonate + NH4(+) + 2 ATP = carbamoyl phosphate + 2 ADP + phosphate + 2 H(+). Its pathway is amino-acid biosynthesis; L-arginine biosynthesis; carbamoyl phosphate from bicarbonate: step 1/1. The protein operates within pyrimidine metabolism; UMP biosynthesis via de novo pathway; (S)-dihydroorotate from bicarbonate: step 1/3. Large subunit of the glutamine-dependent carbamoyl phosphate synthetase (CPSase). CPSase catalyzes the formation of carbamoyl phosphate from the ammonia moiety of glutamine, carbonate, and phosphate donated by ATP, constituting the first step of 2 biosynthetic pathways, one leading to arginine and/or urea and the other to pyrimidine nucleotides. The large subunit (synthetase) binds the substrates ammonia (free or transferred from glutamine from the small subunit), hydrogencarbonate and ATP and carries out an ATP-coupled ligase reaction, activating hydrogencarbonate by forming carboxy phosphate which reacts with ammonia to form carbamoyl phosphate. This Clostridium botulinum (strain Alaska E43 / Type E3) protein is Carbamoyl phosphate synthase large chain.